Consider the following 748-residue polypeptide: MGRAEAAAMIPGLALLWVAGLGDTAPNLPRLRLSFQELQARHGVRTFRLERTCCYEALLVDEERGRLFVGAENHVASLSLDNISKRAKKLAWPAPVEWREECNWAGKDIGTECMNFVKLLHTYNHTHLLACGTGAFHPTCALWRWATAGGTHASTGPEKLEDGKGKTPYDPRHRAASVLVGEELYSGVTADLMGRDFTIFRSLGQNPSLRTEPHDSRWLNEPKFVKVFWIPESENPDDDKIYFFFRESAVEAAPAMGRMSVSRVGQICRNDLGGQRSLVNKWTTFLKARLVCSVPGVEGDTHFDQLQDVFLLSSRDRQTPLLYAVFSTSSGVFQGSAVCVYSMNDVRRAFLGPFAHKEGPTHQWVSYQGRVPYPRPGMCPSKTFGTFSSTKDFPDDVIQFARNHPLMYNPVLPMGGRPLFLQVGAGYTFTQIAADRVAAADGHYDVLFIGTDVGTVLKVISVPKGSRPNSEGLLLEELQVFEDSAAITSMQISSKRQQLYIASRSAVAQIALHRCTALGRACAECCLARDPYCAWDGSACTRFQPTAKRRFRRQDIRNGDPSTLCSGDSSHSVLLEKKVLGVESGSAFLECEPRSLQAHVQWTFQGAGEAAHTQVLAEERVERTARGLLLRGLRRQDSGVYLCVAVEQGFSQPLRRLVLHVLSAAQAERLARAEEAAAPAPPGPKLWYRDFLQLVEPGGGGGANSLRMCRPQPGHHSVAADSRRKGRNRRMHVSELRAERGPRSAAHW.

The signal sequence occupies residues 1–25 (MGRAEAAAMIPGLALLWVAGLGDTA). The Sema domain occupies 30 to 512 (RLRLSFQELQ…SRSAVAQIAL (483 aa)). An N-linked (GlcNAc...) asparagine glycan is attached at Asn-82. Cys-102 and Cys-113 are oxidised to a cystine. The N-linked (GlcNAc...) asparagine glycan is linked to Asn-124. 5 disulfides stabilise this stretch: Cys-131–Cys-140, Cys-268–Cys-379, Cys-292–Cys-339, Cys-515–Cys-533, and Cys-643–Cys-709. One can recognise an Ig-like C2-type domain in the interval 561 to 659 (PSTLCSGDSS…FSQPLRRLVL (99 aa)). The segment at 708 to 748 (MCRPQPGHHSVAADSRRKGRNRRMHVSELRAERGPRSAAHW) is disordered. Residues 732 to 742 (HVSELRAERGP) are compositionally biased toward basic and acidic residues.

It belongs to the semaphorin family.

It localises to the secreted. In terms of biological role, inhibits axonal extension by providing local signals to specify territories inaccessible for growing axons. The polypeptide is Semaphorin-3B (Sema3b) (Mus musculus (Mouse)).